Here is a 240-residue protein sequence, read N- to C-terminus: RNA transcription, translation and transport factor protein (240 aa).

This sequence belongs to the RTRAF family. Homodimer. Component of a tRNA-splicing ligase complex.

The protein localises to the nucleus. It localises to the cytoplasm. It is found in the cytosol. Its subcellular location is the perinuclear region. The protein resides in the cytoskeleton. The protein localises to the microtubule organizing center. It localises to the centrosome. In terms of biological role, RNA-binding protein involved in modulation of mRNA transcription by Polymerase II. Component of the tRNA-splicing ligase complex. This Xenopus laevis (African clawed frog) protein is RNA transcription, translation and transport factor protein.